The following is a 98-amino-acid chain: Peptides MS9.1 (98 aa).

The N-terminal stretch at 1-21 is a signal peptide; sequence MKQSLILAVLCLALVFATIEA. A propeptide spanning residues 22-27 is cleaved from the precursor; the sequence is KPKADP. Cystine bridges form between cysteine 34–cysteine 46 and cysteine 37–cysteine 52. Propeptides lie at residues 63–64 and 92–98; these read DP and DPVRDAE.

It belongs to the sea anemone BBH family.

It localises to the secreted. Its subcellular location is the nematocyst. Its function is as follows. Acts as a positive modulator of mammalian TRPA1, a non-selective cation channel involved in detection of pain, in vitro yet has an analgesic and anti-inflammatory effect in vivo. The protein is Peptides MS9.1 of Metridium senile (Brown sea anemone).